Reading from the N-terminus, the 237-residue chain is NAD(P)H-quinone oxidoreductase subunit K (237 aa).

Cys-52, Cys-53, Cys-117, and Cys-148 together coordinate [4Fe-4S] cluster.

Belongs to the complex I 20 kDa subunit family. NDH-1 can be composed of about 15 different subunits; different subcomplexes with different compositions have been identified which probably have different functions. [4Fe-4S] cluster serves as cofactor.

The protein resides in the cellular thylakoid membrane. The catalysed reaction is a plastoquinone + NADH + (n+1) H(+)(in) = a plastoquinol + NAD(+) + n H(+)(out). The enzyme catalyses a plastoquinone + NADPH + (n+1) H(+)(in) = a plastoquinol + NADP(+) + n H(+)(out). Its function is as follows. NDH-1 shuttles electrons from an unknown electron donor, via FMN and iron-sulfur (Fe-S) centers, to quinones in the respiratory and/or the photosynthetic chain. The immediate electron acceptor for the enzyme in this species is believed to be plastoquinone. Couples the redox reaction to proton translocation, and thus conserves the redox energy in a proton gradient. Cyanobacterial NDH-1 also plays a role in inorganic carbon-concentration. The chain is NAD(P)H-quinone oxidoreductase subunit K from Thermosynechococcus vestitus (strain NIES-2133 / IAM M-273 / BP-1).